The sequence spans 338 residues: 4-hydroxy-3-methylbut-2-enyl diphosphate reductase (338 aa).

C21 provides a ligand contact to [4Fe-4S] cluster. (2E)-4-hydroxy-3-methylbut-2-enyl diphosphate is bound by residues H50 and H83. H50 and H83 together coordinate dimethylallyl diphosphate. H50 and H83 together coordinate isopentenyl diphosphate. C105 lines the [4Fe-4S] cluster pocket. H133 is a (2E)-4-hydroxy-3-methylbut-2-enyl diphosphate binding site. A dimethylallyl diphosphate-binding site is contributed by H133. H133 serves as a coordination point for isopentenyl diphosphate. Catalysis depends on E135, which acts as the Proton donor. T173 contributes to the (2E)-4-hydroxy-3-methylbut-2-enyl diphosphate binding site. C203 serves as a coordination point for [4Fe-4S] cluster. S231, S232, N233, and S276 together coordinate (2E)-4-hydroxy-3-methylbut-2-enyl diphosphate. 4 residues coordinate dimethylallyl diphosphate: S231, S232, N233, and S276. Isopentenyl diphosphate contacts are provided by S231, S232, N233, and S276.

It belongs to the IspH family. [4Fe-4S] cluster is required as a cofactor.

It catalyses the reaction isopentenyl diphosphate + 2 oxidized [2Fe-2S]-[ferredoxin] + H2O = (2E)-4-hydroxy-3-methylbut-2-enyl diphosphate + 2 reduced [2Fe-2S]-[ferredoxin] + 2 H(+). The catalysed reaction is dimethylallyl diphosphate + 2 oxidized [2Fe-2S]-[ferredoxin] + H2O = (2E)-4-hydroxy-3-methylbut-2-enyl diphosphate + 2 reduced [2Fe-2S]-[ferredoxin] + 2 H(+). It participates in isoprenoid biosynthesis; dimethylallyl diphosphate biosynthesis; dimethylallyl diphosphate from (2E)-4-hydroxy-3-methylbutenyl diphosphate: step 1/1. Its pathway is isoprenoid biosynthesis; isopentenyl diphosphate biosynthesis via DXP pathway; isopentenyl diphosphate from 1-deoxy-D-xylulose 5-phosphate: step 6/6. Functionally, catalyzes the conversion of 1-hydroxy-2-methyl-2-(E)-butenyl 4-diphosphate (HMBPP) into a mixture of isopentenyl diphosphate (IPP) and dimethylallyl diphosphate (DMAPP). Acts in the terminal step of the DOXP/MEP pathway for isoprenoid precursor biosynthesis. The sequence is that of 4-hydroxy-3-methylbut-2-enyl diphosphate reductase from Streptomyces avermitilis (strain ATCC 31267 / DSM 46492 / JCM 5070 / NBRC 14893 / NCIMB 12804 / NRRL 8165 / MA-4680).